Consider the following 528-residue polypeptide: OLD nuclease (528 aa).

Residues 1 to 153 (MLKRLQVKNF…LAQHLPSIRG (153 aa)) are ATPase domain N-terminus. 31–35 (GAGKT) lines the ATP pocket. The segment at 154–245 (SILGRLLQPV…RESDLTLPGD (92 aa)) is dimerization domain. The tract at residues 246-369 (ELGLGIQSAI…FDTARNEVLF (124 aa)) is ATPase domain C-terminus. The segment at 370 to 528 (AKRALLVEGY…IRQVTRPMEE (159 aa)) is toprim domain. Residues Glu377, Asp381, Asp431, and Asp433 each contribute to the a divalent metal cation site. The disordered stretch occupies residues 440-461 (RADEETRRKQEQENKAEQEKNQ). Positions 478 and 480 each coordinate a divalent metal cation. Arg487 acts as the Stabilizes transition state or protonates leaving group in catalysis.

The protein belongs to the class 1 OLD nuclease family. Homodimer. Mg(2+) is required as a cofactor. The cofactor is Mn(2+). Requires Ca(2+) as cofactor.

The catalysed reaction is Exonucleolytic cleavage in the 5'- to 3'-direction to yield nucleoside 5'-phosphates.. An exodeoxyribonuclease that degrades linear or supercoiled dsDNA from 5'-3'. Nicks and linearizes circular DNA. Activity is not stimulated by ATP or AMP-PNP, although it has DNA-stimulated ATPase activity. This Thermus scotoductus (strain ATCC 700910 / SA-01) protein is OLD nuclease.